The primary structure comprises 476 residues: Adenosylhomocysteinase (476 aa).

Thr67, Asp142, and Glu202 together coordinate substrate. 203 to 205 (TTT) is a binding site for NAD(+). Residues Lys232 and Asp236 each contribute to the substrate site. NAD(+)-binding positions include Asn237, 266–271 (GYGDVG), Glu289, Asn324, 345–347 (IGH), and Asn390.

This sequence belongs to the adenosylhomocysteinase family. NAD(+) serves as cofactor.

The protein localises to the cytoplasm. It catalyses the reaction S-adenosyl-L-homocysteine + H2O = L-homocysteine + adenosine. The protein operates within amino-acid biosynthesis; L-homocysteine biosynthesis; L-homocysteine from S-adenosyl-L-homocysteine: step 1/1. In terms of biological role, may play a key role in the regulation of the intracellular concentration of adenosylhomocysteine. This is Adenosylhomocysteinase from Parasynechococcus marenigrum (strain WH8102).